Here is a 636-residue protein sequence, read N- to C-terminus: C-terminal binding protein AN (636 aa).

The interval 1–21 (MSKIRSSATMPHRDQPSPASP) is disordered. Residues serine 91, 147 to 148 (WL), 169 to 174 (VGRSVS), aspartate 193, 231 to 237 (CALTNDT), 258 to 260 (TGS), aspartate 284, and 307 to 311 (RSADY) contribute to the NAD(+) site. Positions 341–489 (VSDEEVEESE…PLEVMQESSP (149 aa)) are disordered. Residues 342-357 (SDEEVEESEASEEEEQ) show a composition bias toward acidic residues. The span at 369 to 384 (ESTSRQQGESTLTSTE) shows a compositional bias: polar residues. The span at 385-395 (IVRREASELKE) shows a compositional bias: basic and acidic residues. Residues 398–409 (SPGQQHVSQNTA) show a composition bias toward polar residues. Residues 417-429 (SRSGKKAKKRHSQ) show a composition bias toward basic residues. The segment covering 430-445 (QKYMQKTDGSSGLNEE) has biased composition (polar residues). Basic and acidic residues predominate over residues 470-480 (SPEDSRSRKTP).

This sequence belongs to the D-isomer specific 2-hydroxyacid dehydrogenase family. Plant AN subfamily. As to quaternary structure, homodimer. Interacts with KCBP and SUB (via intra-cellular domain); AN is not required for the correct subcellular localization and recycling of SUB. Binds to SOKs proteins polymers (e.g. SOK1, SOK2, SOK3 and SOK4). Interacts with IPGA1 on microtubule upon mechanical stress to regulate microtubule organization. NAD(+) serves as cofactor. Expressed in cotyledons, leaves, roots, stems and floral buds.

It localises to the cytoplasm. It is found in the golgi apparatus. The protein localises to the trans-Golgi network. Its subcellular location is the cytoskeleton. Involved in controlling the equilibrium between tubular and stacked structures in the Golgi complex. Required for cortical microtubules (MTs) arrangement that confers cell shape. Cooperatively with IPGA1, negatively regulates cortical microtubules (CMTs) organization in response to mechanical stress and modulates pavement cells morphogenesis leading to puzzle shape, probably in an AAA1/KTN1-dependent manner. Regulates the width of leaves by controlling the polar elongation of leaf cells. Involved in the regulation of trichome branching. Seems to not be able to regulate gene transcription. Regulates epidermal cell divisions and elongation in a non-cell-autonomous manner (regulated by subepidermal cells), but regulates epidermal cell polarity, shape, trichome branching and elongation in a cell-autonomous manner. Negatively regulates growth in the petiole elongation. Prevents lipid peroxidation as a result of abiotic stress response. Is involved in the SUB-dependent signaling mechanism and may act in a membrane trafficking event around the trans-Golgi network. In Arabidopsis thaliana (Mouse-ear cress), this protein is C-terminal binding protein AN.